The chain runs to 1062 residues: Isoleucine--tRNA ligase (1062 aa).

A 'HIGH' region motif is present at residues 47–57 (PYTTGHIHLGT). The 'KMSKS' region motif lies at 591–595 (KMSKS). Lys-594 is an ATP binding site.

Belongs to the class-I aminoacyl-tRNA synthetase family. IleS type 2 subfamily. In terms of assembly, monomer. Zn(2+) serves as cofactor.

Its subcellular location is the cytoplasm. It catalyses the reaction tRNA(Ile) + L-isoleucine + ATP = L-isoleucyl-tRNA(Ile) + AMP + diphosphate. Functionally, catalyzes the attachment of isoleucine to tRNA(Ile). As IleRS can inadvertently accommodate and process structurally similar amino acids such as valine, to avoid such errors it has two additional distinct tRNA(Ile)-dependent editing activities. One activity is designated as 'pretransfer' editing and involves the hydrolysis of activated Val-AMP. The other activity is designated 'posttransfer' editing and involves deacylation of mischarged Val-tRNA(Ile). The chain is Isoleucine--tRNA ligase from Methanospirillum hungatei JF-1 (strain ATCC 27890 / DSM 864 / NBRC 100397 / JF-1).